We begin with the raw amino-acid sequence, 365 residues long: P43 5S RNA-binding protein (365 aa).

C2H2-type zinc fingers lie at residues 15–39 (FRCPAAGCKAVYRKEGKLRDHMAGH), 45–69 (WKCGKKDCGKMFARKRQIQKHMKRH), 75–100 (HSCPTAGCKMTFSTKKSLSRHKLYKH), 106–130 (LKCSVPGCKRSFRKKRALRIHVSEH), 136–160 (SVCDVPGCGWKSTSAAKLAAHHRRH), 163–187 (YRCSYEDCQTVSPTWTALQTHLKKH), 191–213 (LQCAACKKPFKKASALRRHKATH), 220–245 (LPCPRQDCDKIFSTVFNLTHHLRKVH), and 251–275 (HRCPHSNCTRSFAMRESLVRHLVVH).

As to quaternary structure, the 42S RNP particle comprises four subunits each of which contains one molecule of 5S RNA, three molecules of tRNA, two molecules of p50 (EF1-alpha) and one molecule of the 5S RNA binding protein 43.

Functionally, p43 is a 5S RNA binding protein which is a major constituent of oocytes and comprises part of a 42S ribonucleoprotein storage particle. This is P43 5S RNA-binding protein from Xenopus borealis (Kenyan clawed frog).